A 141-amino-acid chain; its full sequence is Large ribosomal subunit protein uL14 (141 aa).

The protein belongs to the universal ribosomal protein uL14 family.

The polypeptide is Large ribosomal subunit protein uL14 (RPL23) (Tetrahymena thermophila (strain SB210)).